The primary structure comprises 297 residues: MRIILITGISGSGKSVALNALEDAGYYCVDNLPPRFLPQLASYLAEDGQDRLAVAIDARSSASLDEMPAMIRDLSRAHDVRVLFLNASTQSLIQRFSETRRRHPLSGSTSHDADVGLLTSLAEAIERERELVAGLAEFGHQIDTSNLRANVLRAWVKRFIEQKDSGLVLMFESFGFKRGVPLDADFVFDVRTLPNPYYDHELRPLTGLDKPVIDFLDALPVVHEMIHDIEKFLVKWLPHFRDDNRSYLTVAIGCTGGQHRSVFIAETLAARLASSANVIVRHRDAPVEAGESSKLVA.

8-15 (GISGSGKS) is an ATP binding site. 57–60 (DARS) provides a ligand contact to GTP.

The protein belongs to the RapZ-like family.

Functionally, displays ATPase and GTPase activities. This Paraburkholderia phytofirmans (strain DSM 17436 / LMG 22146 / PsJN) (Burkholderia phytofirmans) protein is Nucleotide-binding protein Bphyt_0592.